A 241-amino-acid chain; its full sequence is Pyridoxine/pyridoxamine 5'-phosphate oxidase (241 aa).

A disordered region spans residues 1 to 35 (MASNPPSAASPRRTAVSPGADRPDGPDPAGQRQSY). Substrate contacts are provided by residues 32–35 (RQSY) and lysine 92. FMN-binding positions include 87–92 (RTVLLK), 102–103 (YT), arginine 108, lysine 109, and glutamine 131. Substrate-binding residues include tyrosine 149, arginine 153, and serine 157. FMN is bound by residues 166 to 167 (QS) and tryptophan 212. 218 to 220 (RLH) is a substrate binding site. Arginine 222 is a binding site for FMN.

This sequence belongs to the pyridoxamine 5'-phosphate oxidase family. Homodimer. Requires FMN as cofactor.

The catalysed reaction is pyridoxamine 5'-phosphate + O2 + H2O = pyridoxal 5'-phosphate + H2O2 + NH4(+). It catalyses the reaction pyridoxine 5'-phosphate + O2 = pyridoxal 5'-phosphate + H2O2. The protein operates within cofactor metabolism; pyridoxal 5'-phosphate salvage; pyridoxal 5'-phosphate from pyridoxamine 5'-phosphate: step 1/1. Its pathway is cofactor metabolism; pyridoxal 5'-phosphate salvage; pyridoxal 5'-phosphate from pyridoxine 5'-phosphate: step 1/1. Catalyzes the oxidation of either pyridoxine 5'-phosphate (PNP) or pyridoxamine 5'-phosphate (PMP) into pyridoxal 5'-phosphate (PLP). The chain is Pyridoxine/pyridoxamine 5'-phosphate oxidase from Frankia alni (strain DSM 45986 / CECT 9034 / ACN14a).